Here is a 332-residue protein sequence, read N- to C-terminus: NH(3)-dependent NAD(+) synthetase (332 aa).

48-55 (GLSGGVDS) contributes to the ATP binding site. D54 contributes to the Mg(2+) binding site. Deamido-NAD(+) is bound at residue R184. T204 is an ATP binding site. A Mg(2+)-binding site is contributed by E209. Residues K217 and D224 each coordinate deamido-NAD(+). K233 and T255 together coordinate ATP.

It belongs to the NAD synthetase family. In terms of assembly, homodimer.

The catalysed reaction is deamido-NAD(+) + NH4(+) + ATP = AMP + diphosphate + NAD(+) + H(+). It functions in the pathway cofactor biosynthesis; NAD(+) biosynthesis; NAD(+) from deamido-NAD(+) (ammonia route): step 1/1. Functionally, catalyzes the ATP-dependent amidation of deamido-NAD to form NAD. Uses ammonia as a nitrogen source. The protein is NH(3)-dependent NAD(+) synthetase of Rhizobium rhizogenes (strain K84 / ATCC BAA-868) (Agrobacterium radiobacter).